A 194-amino-acid polypeptide reads, in one-letter code: ATP-dependent Clp protease proteolytic subunit (194 aa).

Catalysis depends on Ser98, which acts as the Nucleophile. The active site involves His123.

This sequence belongs to the peptidase S14 family. Fourteen ClpP subunits assemble into 2 heptameric rings which stack back to back to give a disk-like structure with a central cavity, resembling the structure of eukaryotic proteasomes.

Its subcellular location is the cytoplasm. The catalysed reaction is Hydrolysis of proteins to small peptides in the presence of ATP and magnesium. alpha-casein is the usual test substrate. In the absence of ATP, only oligopeptides shorter than five residues are hydrolyzed (such as succinyl-Leu-Tyr-|-NHMec, and Leu-Tyr-Leu-|-Tyr-Trp, in which cleavage of the -Tyr-|-Leu- and -Tyr-|-Trp bonds also occurs).. Cleaves peptides in various proteins in a process that requires ATP hydrolysis. Has a chymotrypsin-like activity. Plays a major role in the degradation of misfolded proteins. The chain is ATP-dependent Clp protease proteolytic subunit from Clostridium tetani (strain Massachusetts / E88).